The sequence spans 137 residues: Transcription antitermination protein NusB (137 aa).

Belongs to the NusB family.

Functionally, involved in transcription antitermination. Required for transcription of ribosomal RNA (rRNA) genes. Binds specifically to the boxA antiterminator sequence of the ribosomal RNA (rrn) operons. The sequence is that of Transcription antitermination protein NusB from Aeromonas hydrophila subsp. hydrophila (strain ATCC 7966 / DSM 30187 / BCRC 13018 / CCUG 14551 / JCM 1027 / KCTC 2358 / NCIMB 9240 / NCTC 8049).